The following is an 809-amino-acid chain: Glycerol-3-phosphate acyltransferase (809 aa).

Positions 306–311 (HRSHMD) match the HXXXXD motif motif.

The protein belongs to the GPAT/DAPAT family.

It is found in the cell inner membrane. The enzyme catalyses sn-glycerol 3-phosphate + an acyl-CoA = a 1-acyl-sn-glycero-3-phosphate + CoA. The protein operates within phospholipid metabolism; CDP-diacylglycerol biosynthesis; CDP-diacylglycerol from sn-glycerol 3-phosphate: step 1/3. This Vibrio vulnificus (strain CMCP6) protein is Glycerol-3-phosphate acyltransferase.